The following is a 209-amino-acid chain: Ribosomal RNA large subunit methyltransferase E (209 aa).

S-adenosyl-L-methionine-binding residues include Gly-63, Trp-65, Asp-83, Asp-99, and Asp-124. The active-site Proton acceptor is Lys-164.

The protein belongs to the class I-like SAM-binding methyltransferase superfamily. RNA methyltransferase RlmE family.

It is found in the cytoplasm. The catalysed reaction is uridine(2552) in 23S rRNA + S-adenosyl-L-methionine = 2'-O-methyluridine(2552) in 23S rRNA + S-adenosyl-L-homocysteine + H(+). Functionally, specifically methylates the uridine in position 2552 of 23S rRNA at the 2'-O position of the ribose in the fully assembled 50S ribosomal subunit. This is Ribosomal RNA large subunit methyltransferase E from Shewanella oneidensis (strain ATCC 700550 / JCM 31522 / CIP 106686 / LMG 19005 / NCIMB 14063 / MR-1).